The following is a 165-amino-acid chain: Histone H1-like protein HC2 (165 aa).

2 stretches are compositionally biased toward basic residues: residues 1–50 and 59–80; these read MLGV…KTVA and PVAK…KKTV. Positions 1-80 are disordered; that stretch reads MLGVQKKRST…VRKVAAKKTV (80 aa).

Belongs to the histone H1/H5 family. HCT subfamily.

Functionally, might have a role in establishing the nucleoid structure of elementary bodies. The sequence is that of Histone H1-like protein HC2 (hctB) from Chlamydia trachomatis.